Reading from the N-terminus, the 255-residue chain is tRNA (guanine-N(1)-)-methyltransferase (255 aa).

S-adenosyl-L-methionine contacts are provided by residues Gly-113 and 133–138 (IGDYVL).

The protein belongs to the RNA methyltransferase TrmD family. Homodimer.

The protein localises to the cytoplasm. It catalyses the reaction guanosine(37) in tRNA + S-adenosyl-L-methionine = N(1)-methylguanosine(37) in tRNA + S-adenosyl-L-homocysteine + H(+). In terms of biological role, specifically methylates guanosine-37 in various tRNAs. This is tRNA (guanine-N(1)-)-methyltransferase from Chloroflexus aggregans (strain MD-66 / DSM 9485).